The following is a 286-amino-acid chain: Aldo-keto reductase MAP_4149 (286 aa).

The Proton donor role is filled by Tyr-61. NADPH-binding residues include Leu-201, Val-203, Val-239, Arg-241, Ser-242, Arg-247, and Asn-251.

The protein belongs to the aldo/keto reductase family.

The sequence is that of Aldo-keto reductase MAP_4149 from Mycolicibacterium paratuberculosis (strain ATCC BAA-968 / K-10) (Mycobacterium paratuberculosis).